The following is a 602-amino-acid chain: 3-hydroxy-3-methylglutaryl-coenzyme A reductase 2 (602 aa).

A run of 2 helical transmembrane segments spans residues 44-67 (ASDALPLPLYLTTNGLFFTMFFSV) and 95-115 (AIVSLIASVIYLLGFFGIGFV). Residues 116-187 (QTFVSRGNND…PLITSASSGE (72 aa)) form a linker region. Asn124 carries an N-linked (GlcNAc...) asparagine glycan. A catalytic region spans residues 188–602 (DEEIIKSVVQ…STKDVTKASS (415 aa)). Residue Glu281 is the Charge relay system of the active site. Asn345 is a glycosylation site (N-linked (GlcNAc...) asparagine). Residue Lys413 is the Charge relay system of the active site. A glycan (N-linked (GlcNAc...) asparagine) is linked at Asn458. Asp489 serves as the catalytic Charge relay system. His587 functions as the Proton donor in the catalytic mechanism. An N-linked (GlcNAc...) asparagine glycan is attached at Asn591.

This sequence belongs to the HMG-CoA reductase family.

It localises to the endoplasmic reticulum membrane. It catalyses the reaction (R)-mevalonate + 2 NADP(+) + CoA = (3S)-3-hydroxy-3-methylglutaryl-CoA + 2 NADPH + 2 H(+). The protein operates within metabolic intermediate biosynthesis; (R)-mevalonate biosynthesis; (R)-mevalonate from acetyl-CoA: step 3/3. Functionally, catalyzes the synthesis of mevalonate. The specific precursor of all isoprenoid compounds present in plants. The chain is 3-hydroxy-3-methylglutaryl-coenzyme A reductase 2 (HMG2) from Solanum lycopersicum (Tomato).